Consider the following 348-residue polypeptide: GTPase Obg 1 (348 aa).

An Obg domain is found at 1-159 (MSFVDEAKIH…HCVLLKLKIV (159 aa)). In terms of domain architecture, OBG-type G spans 160–329 (SDVGIIGMPN…LHAQVKKAVV (170 aa)). Residues 166–173 (GMPNAGKS), 191–195 (FTTLE), 212–215 (DIPG), 279–282 (NKCD), and 310–312 (GDE) each bind GTP. Mg(2+)-binding residues include Ser173 and Thr193.

The protein belongs to the TRAFAC class OBG-HflX-like GTPase superfamily. OBG GTPase family. As to quaternary structure, monomer. Requires Mg(2+) as cofactor.

It is found in the cytoplasm. Its function is as follows. An essential GTPase which binds GTP, GDP and possibly (p)ppGpp with moderate affinity, with high nucleotide exchange rates and a fairly low GTP hydrolysis rate. Plays a role in control of the cell cycle, stress response, ribosome biogenesis and in those bacteria that undergo differentiation, in morphogenesis control. In Anaplasma marginale (strain St. Maries), this protein is GTPase Obg 1.